Consider the following 469-residue polypeptide: Uronate isomerase (469 aa).

The protein belongs to the metallo-dependent hydrolases superfamily. Uronate isomerase family.

The catalysed reaction is D-glucuronate = D-fructuronate. The enzyme catalyses aldehydo-D-galacturonate = keto-D-tagaturonate. It participates in carbohydrate metabolism; pentose and glucuronate interconversion. This Yersinia pseudotuberculosis serotype O:1b (strain IP 31758) protein is Uronate isomerase.